The primary structure comprises 164 residues: Large ribosomal subunit protein uL15 (164 aa).

The interval 1-52 is disordered; that stretch reads MSLSKLKAPKGANRERTRVGRGQGSGLGKTAGRGGKGQKARSGNMHFEGFEG. A compositionally biased stretch (gly residues) spans 21 to 37; the sequence is RGQGSGLGKTAGRGGKG.

Belongs to the universal ribosomal protein uL15 family. Part of the 50S ribosomal subunit.

Functionally, binds to the 23S rRNA. The sequence is that of Large ribosomal subunit protein uL15 from Anaeromyxobacter sp. (strain Fw109-5).